The following is a 257-amino-acid chain: UPF0246 protein Sputcn32_1053 (257 aa).

It belongs to the UPF0246 family.

The polypeptide is UPF0246 protein Sputcn32_1053 (Shewanella putrefaciens (strain CN-32 / ATCC BAA-453)).